The sequence spans 373 residues: Spermidine/putrescine import ATP-binding protein PotA (373 aa).

In terms of domain architecture, ABC transporter spans 5–235 (IVFEHVSKKF…PKSSFVADFI (231 aa)). 37-44 (GPSGCGKT) provides a ligand contact to ATP.

The protein belongs to the ABC transporter superfamily. Spermidine/putrescine importer (TC 3.A.1.11.1) family. The complex is composed of two ATP-binding proteins (PotA), two transmembrane proteins (PotB and PotC) and a solute-binding protein (PotD).

The protein localises to the cell inner membrane. It carries out the reaction ATP + H2O + polyamine-[polyamine-binding protein]Side 1 = ADP + phosphate + polyamineSide 2 + [polyamine-binding protein]Side 1.. Part of the ABC transporter complex PotABCD involved in spermidine/putrescine import. Responsible for energy coupling to the transport system. The protein is Spermidine/putrescine import ATP-binding protein PotA of Protochlamydia amoebophila (strain UWE25).